The primary structure comprises 553 residues: CTP synthase (553 aa).

The segment at 1–270 is amidoligase domain; the sequence is MTKYVFVTGG…DELICEELKL (270 aa). CTP is bound at residue S13. Residue S13 participates in UTP binding. ATP contacts are provided by residues 14–19 and D71; that span reads SLGKGI. Positions 71 and 144 each coordinate Mg(2+). Residues 151–153, 191–196, and K227 contribute to the CTP site; these read DIE and KTKPTQ. Residues 191–196 and K227 each bind UTP; that span reads KTKPTQ. A Glutamine amidotransferase type-1 domain is found at 295-547; that stretch reads TIGMVGKYVE…VEAARAHHEA (253 aa). G356 is a binding site for L-glutamine. The active-site Nucleophile; for glutamine hydrolysis is C383. Residues 384 to 387, E407, and R473 each bind L-glutamine; that span reads LGMQ. Active-site residues include H520 and E522.

It belongs to the CTP synthase family. Homotetramer.

It carries out the reaction UTP + L-glutamine + ATP + H2O = CTP + L-glutamate + ADP + phosphate + 2 H(+). The catalysed reaction is L-glutamine + H2O = L-glutamate + NH4(+). It catalyses the reaction UTP + NH4(+) + ATP = CTP + ADP + phosphate + 2 H(+). It participates in pyrimidine metabolism; CTP biosynthesis via de novo pathway; CTP from UDP: step 2/2. Allosterically activated by GTP, when glutamine is the substrate; GTP has no effect on the reaction when ammonia is the substrate. The allosteric effector GTP functions by stabilizing the protein conformation that binds the tetrahedral intermediate(s) formed during glutamine hydrolysis. Inhibited by the product CTP, via allosteric rather than competitive inhibition. Catalyzes the ATP-dependent amination of UTP to CTP with either L-glutamine or ammonia as the source of nitrogen. Regulates intracellular CTP levels through interactions with the four ribonucleotide triphosphates. The polypeptide is CTP synthase (Paraburkholderia phymatum (strain DSM 17167 / CIP 108236 / LMG 21445 / STM815) (Burkholderia phymatum)).